A 504-amino-acid chain; its full sequence is Maturase K (504 aa).

The protein belongs to the intron maturase 2 family. MatK subfamily.

It is found in the plastid. It localises to the chloroplast. Usually encoded in the trnK tRNA gene intron. Probably assists in splicing its own and other chloroplast group II introns. This is Maturase K from Calyptranthes pallens (Spicewood).